The primary structure comprises 148 residues: HTH-type transcriptional regulator Ptr1 (148 aa).

One can recognise an HTH asnC-type domain in the interval 2-63 (LDRIDLKILR…SINPKNLGFE (62 aa)). The segment at residues 21–40 (FREIGRELGISEGTVRNRVK) is a DNA-binding region (H-T-H motif).

As to quaternary structure, homodimer.

Functionally, participates in positive as well as negative regulation of transcription. Binds to its own promoter. This chain is HTH-type transcriptional regulator Ptr1 (ptr1), found in Methanocaldococcus jannaschii (strain ATCC 43067 / DSM 2661 / JAL-1 / JCM 10045 / NBRC 100440) (Methanococcus jannaschii).